We begin with the raw amino-acid sequence, 77 residues long: MVSTPELKKYMDKKILLNINGSRKVAGILRGYDIFLNVVLDDAMEINGEDPANNHQLGLQTVIRGNSIISLEALDAI.

The Sm domain maps to 2–77 (VSTPELKKYM…IISLEALDAI (76 aa)).

The protein belongs to the snRNP Sm proteins family. Component of the Sm core complex, present in spliceosomal snRNP U1, U2, U4/U6 and U5. The core complex contains SMB1, SMD1, SMD2, SMD3, SME1, SMX3 and SMX2 (Sm proteins B, D1, D2, D3, E, F and G, respectively), and is probably a heptameric ring structure. SMX2 specifically interacts with SME1. Belongs to the CWC complex (or CEF1-associated complex), a spliceosome sub-complex reminiscent of a late-stage spliceosome composed of the U2, U5 and U6 snRNAs and at least BUD13, BUD31, BRR2, CDC40, CEF1, CLF1, CUS1, CWC2, CWC15, CWC21, CWC22, CWC23, CWC24, CWC25, CWC27, ECM2, HSH155, IST3, ISY1, LEA1, MSL1, NTC20, PRP8, PRP9, PRP11, PRP19, PRP21, PRP22, PRP45, PRP46, SLU7, SMB1, SMD1, SMD2, SMD3, SMX2, SMX3, SNT309, SNU114, SPP2, SYF1, SYF2, RSE1 and YJU2. Component of the U4/U6-U5 tri-snRNP complex composed of the U4, U6 and U5 snRNAs and at least PRP3, PRP4, PRP6, PRP8, PRP18, PRP31, PRP38, SNU13, SNU23, SNU66, SNU114, SPP381, SMB1, SMD1, SMD2, SMD3, SMX2, SMX3, LSM2, LSM3, LSM4, LSM5, LSM6, LSM7, LSM8, BRR2 and DIB1.

The protein resides in the nucleus. Its subcellular location is the cytoplasm. In terms of biological role, plays a role in pre-mRNA splicing as a core component of the spliceosomal U1, U2, U4 and U5 small nuclear ribonucleoproteins (snRNPs), the building blocks of the spliceosome. The chain is Small nuclear ribonucleoprotein G (SMX2) from Saccharomyces cerevisiae (strain ATCC 204508 / S288c) (Baker's yeast).